The following is a 1040-amino-acid chain: Tudor domain-containing protein 5 (1040 aa).

HTH OST-type domains follow at residues isoleucine 7 to proline 80, valine 122 to serine 197, and valine 291 to aspartate 365. The Tudor domain occupies phenylalanine 533–leucine 592. Serine 809 carries the post-translational modification Phosphoserine. 2 disordered regions span residues aspartate 857 to aspartate 891 and alanine 912 to lysine 975. Polar residues-rich tracts occupy residues glutamate 872 to aspartate 891 and alanine 912 to threonine 924. Residue serine 943 is modified to Phosphoserine. Over residues asparagine 946–glycine 956 the composition is skewed to polar residues. Residues leucine 958 to lysine 975 show a composition bias toward basic and acidic residues.

It belongs to the TDRD5 family. Gonad-specific. Mainly expressed in testis. Present at low level in ovary (at protein level).

The protein localises to the cytoplasm. Functionally, required during spermiogenesis to participate in the repression transposable elements and prevent their mobilization, which is essential for the germline integrity. Probably acts via the piRNA metabolic process, which mediates the repression of transposable elements during meiosis by forming complexes composed of piRNAs and Piwi proteins and govern the methylation and subsequent repression of transposons. Required for chromatoid body (CB) assembly. The chain is Tudor domain-containing protein 5 (Tdrd5) from Mus musculus (Mouse).